The sequence spans 295 residues: GTPase Era (295 aa).

Residues Lys7 to Trp176 form the Era-type G domain. Residues Gly15–Ser22 form a G1 region. Position 15-22 (Gly15–Ser22) interacts with GTP. A G2 region spans residues Gln41 to Ser45. Residues Asp62–Gly65 are G3. GTP contacts are provided by residues Asp62–Ile66 and Asn124–Asp127. Positions Asn124–Asp127 are G4. Residues Ile152–Ala154 are G5. One can recognise a KH type-2 domain in the interval Leu204–Ala281.

Belongs to the TRAFAC class TrmE-Era-EngA-EngB-Septin-like GTPase superfamily. Era GTPase family. As to quaternary structure, monomer.

Its subcellular location is the cytoplasm. It localises to the cell inner membrane. Its function is as follows. An essential GTPase that binds both GDP and GTP, with rapid nucleotide exchange. Plays a role in 16S rRNA processing and 30S ribosomal subunit biogenesis and possibly also in cell cycle regulation and energy metabolism. This Rickettsia prowazekii (strain Madrid E) protein is GTPase Era.